The chain runs to 88 residues: Eclosion hormone (88 aa).

The N-terminal stretch at 1-26 (MAGKVTVAFFMFAMIAFLANFGYVEC) is a signal peptide. Disulfide bonds link Cys-40/Cys-64, Cys-44/Cys-60, and Cys-47/Cys-75.

Belongs to the insect eclosion hormone family.

Its subcellular location is the secreted. Neuropeptide that triggers the performance of ecdysis behaviors at the end of a molt. It triggers adult behavior patterns: larval, pupal and adult ecdysis, and plasticization during the molt. The sequence is that of Eclosion hormone from Manduca sexta (Tobacco hawkmoth).